Consider the following 152-residue polypeptide: Ribosomal RNA large subunit methyltransferase H (152 aa).

S-adenosyl-L-methionine-binding positions include L68, G100, and 119-124 (FGPMTW).

It belongs to the RNA methyltransferase RlmH family. In terms of assembly, homodimer.

The protein resides in the cytoplasm. It catalyses the reaction pseudouridine(1915) in 23S rRNA + S-adenosyl-L-methionine = N(3)-methylpseudouridine(1915) in 23S rRNA + S-adenosyl-L-homocysteine + H(+). Functionally, specifically methylates the pseudouridine at position 1915 (m3Psi1915) in 23S rRNA. The protein is Ribosomal RNA large subunit methyltransferase H of Rhodospirillum centenum (strain ATCC 51521 / SW).